The primary structure comprises 36 residues: MDSRLLVVLIPVLAAASWAVYNIGRVALQQFRKMTS.

Topologically, residues 1-4 are lumenal; that stretch reads MDSR. The helical transmembrane segment at 5–23 threads the bilayer; that stretch reads LLVVLIPVLAAASWAVYNI. The Stromal segment spans residues 24–36; it reads GRVALQQFRKMTS.

This sequence belongs to the PsbY family. PSII is composed of 1 copy each of membrane proteins PsbA, PsbB, PsbC, PsbD, PsbE, PsbF, PsbH, PsbI, PsbJ, PsbK, PsbL, PsbM, PsbT, PsbX, PsbY, PsbZ, Psb30/Ycf12, at least 3 peripheral proteins of the oxygen-evolving complex and a large number of cofactors. It forms dimeric complexes.

Its subcellular location is the plastid. The protein localises to the chloroplast thylakoid membrane. Functionally, loosely associated component of the core of photosystem II (PSII), it is not always seen in crystals. PSII is a light-driven water plastoquinone oxidoreductase, using light energy to abstract electrons from H(2)O, generating a proton gradient subsequently used for ATP formation. This chain is Photosystem II reaction center protein Y, found in Pyropia yezoensis (Susabi-nori).